Consider the following 418-residue polypeptide: Pestheic acid cluster transcriptional regulator 1 (418 aa).

A disordered region spans residues Gly244–Pro272. Residues Thr245–Lys260 show a composition bias toward low complexity.

It localises to the nucleus. In terms of biological role, transcription factor that, with ptaR2 and ptaR3, coregulates the expression of the gene cluster that mediates the biosynthesis of pestheic acid, a diphenyl ether which is a biosynthetic precursor of the unique chloropupukeananes. This is Pestheic acid cluster transcriptional regulator 1 from Pestalotiopsis fici (strain W106-1 / CGMCC3.15140).